A 460-amino-acid chain; its full sequence is MKKVILIGRPNVGKSSLFNRFVGKRIAITSDISGTTRDTNKTVIEIFDKKCILIDSGGLDDSSEMFAKVQAKTLKEVRNCDIILFIVDGKFMPSDDEKKLFHSFSGLNKPLALVINKIDSKKDEERSFEFIEFGAKDKFNISVSHNDGIDEVKSWIYKLLDDEISADESENFDDFISNLDENGEILEEKDESFYENKPIKVGIIGRVNVGKSSLLNALVKENRAVVSEVAGTTIDPVNENYTFNDKVIEFVDTAGIRKRGKIEGIEKFALNRTEKILEQCDIALMVLDASEPFSELDERIAGLAAKFELGVIIVLNKWDKSEEDFDKVQKKIKDKFRFLSYAPIISVSALGGKRIHKIYDMILEIYANFTQKIATSKLNDFIAEATAQHPIPQDKGKNVKIYYAAQIGFAPPKIALVMNRTVLHFSYKRYLINQMRENFTLNGTPVILLPRKRGNSKDEK.

EngA-type G domains are found at residues 2–164 and 199–370; these read KKVI…DDEI and IKVG…ANFT. GTP is bound by residues 8–15, 55–59, 116–119, 205–212, 252–256, and 316–319; these read GRPNVGKS, DSGGL, NKID, GRVNVGKS, DTAGI, and NKWD. One can recognise a KH-like domain in the interval 371 to 454; the sequence is QKIATSKLND…PVILLPRKRG (84 aa).

It belongs to the TRAFAC class TrmE-Era-EngA-EngB-Septin-like GTPase superfamily. EngA (Der) GTPase family. As to quaternary structure, associates with the 50S ribosomal subunit.

Functionally, GTPase that plays an essential role in the late steps of ribosome biogenesis. The sequence is that of GTPase Der from Campylobacter hominis (strain ATCC BAA-381 / DSM 21671 / CCUG 45161 / LMG 19568 / NCTC 13146 / CH001A).